The primary structure comprises 330 residues: Glucokinase (330 aa).

Belongs to the ROK (NagC/XylR) family.

The protein resides in the cytoplasm. It carries out the reaction D-glucose + ATP = D-glucose 6-phosphate + ADP + H(+). This is Glucokinase (glcK) from Halalkalibacterium halodurans (strain ATCC BAA-125 / DSM 18197 / FERM 7344 / JCM 9153 / C-125) (Bacillus halodurans).